The primary structure comprises 140 residues: uncharacterized protein (140 aa).

One can recognise an N-acetyltransferase domain in the interval 2–140 (KAVIAKNEEQ…GIPHLQMMKD (139 aa)).

The protein belongs to the acetyltransferase family.

This is an uncharacterized protein from Bacillus subtilis (strain 168).